The primary structure comprises 367 residues: Phosphoribosylaminoimidazole-succinocarboxamide synthase (367 aa).

It belongs to the SAICAR synthetase family.

It carries out the reaction 5-amino-1-(5-phospho-D-ribosyl)imidazole-4-carboxylate + L-aspartate + ATP = (2S)-2-[5-amino-1-(5-phospho-beta-D-ribosyl)imidazole-4-carboxamido]succinate + ADP + phosphate + 2 H(+). It functions in the pathway purine metabolism; IMP biosynthesis via de novo pathway; 5-amino-1-(5-phospho-D-ribosyl)imidazole-4-carboxamide from 5-amino-1-(5-phospho-D-ribosyl)imidazole-4-carboxylate: step 1/2. In Shewanella frigidimarina (strain NCIMB 400), this protein is Phosphoribosylaminoimidazole-succinocarboxamide synthase.